The following is a 60-amino-acid chain: RICYNHQSTTRATTKSCEENSCYKKYWRDHRGTIIERGCGCPKVKPGVGIHCCQSDKCNY.

4 disulfide bridges follow: cysteine 3–cysteine 22, cysteine 17–cysteine 39, cysteine 41–cysteine 52, and cysteine 53–cysteine 58.

It belongs to the three-finger toxin family. Short-chain subfamily. Type I alpha-neurotoxin sub-subfamily. As to expression, expressed by the venom gland.

It is found in the secreted. In terms of biological role, binds to muscle nicotinic acetylcholine receptor (nAChR) and inhibit acetylcholine from binding to the receptor, thereby impairing neuromuscular transmission. The sequence is that of Short neurotoxin 1 from Dendroaspis polylepis polylepis (Black mamba).